Reading from the N-terminus, the 729-residue chain is Phosphoribosylformylglycinamidine synthase subunit PurL (729 aa).

His-54 is an active-site residue. Residues Tyr-57 and Lys-96 each contribute to the ATP site. Mg(2+) is bound at residue Glu-98. Substrate is bound by residues 99–102 (SHNH) and Arg-121. His-100 functions as the Proton acceptor in the catalytic mechanism. Asp-122 provides a ligand contact to Mg(2+). Gln-245 provides a ligand contact to substrate. Asp-273 is a binding site for Mg(2+). Residue 317–319 (ETQ) coordinates substrate. ATP is bound by residues Asp-495 and Gly-532. Asn-533 is a binding site for Mg(2+). Residue Ser-535 coordinates substrate.

This sequence belongs to the FGAMS family. In terms of assembly, monomer. Part of the FGAM synthase complex composed of 1 PurL, 1 PurQ and 2 PurS subunits.

The protein resides in the cytoplasm. It catalyses the reaction N(2)-formyl-N(1)-(5-phospho-beta-D-ribosyl)glycinamide + L-glutamine + ATP + H2O = 2-formamido-N(1)-(5-O-phospho-beta-D-ribosyl)acetamidine + L-glutamate + ADP + phosphate + H(+). It functions in the pathway purine metabolism; IMP biosynthesis via de novo pathway; 5-amino-1-(5-phospho-D-ribosyl)imidazole from N(2)-formyl-N(1)-(5-phospho-D-ribosyl)glycinamide: step 1/2. Its function is as follows. Part of the phosphoribosylformylglycinamidine synthase complex involved in the purines biosynthetic pathway. Catalyzes the ATP-dependent conversion of formylglycinamide ribonucleotide (FGAR) and glutamine to yield formylglycinamidine ribonucleotide (FGAM) and glutamate. The FGAM synthase complex is composed of three subunits. PurQ produces an ammonia molecule by converting glutamine to glutamate. PurL transfers the ammonia molecule to FGAR to form FGAM in an ATP-dependent manner. PurS interacts with PurQ and PurL and is thought to assist in the transfer of the ammonia molecule from PurQ to PurL. The protein is Phosphoribosylformylglycinamidine synthase subunit PurL of Staphylococcus epidermidis (strain ATCC 35984 / DSM 28319 / BCRC 17069 / CCUG 31568 / BM 3577 / RP62A).